The following is a 287-amino-acid chain: Festuclavine synthase I (287 aa).

The protein belongs to the fgaFS/easG family.

It catalyses the reaction festuclavine + NAD(+) = 6,8-dimethyl-6,7-didehydroergoline + NADH + H(+). It participates in alkaloid biosynthesis; ergot alkaloid biosynthesis. Festuclavine synthase; part of the gene cluster that mediates the biosynthesis of isofumigaclavines, fungal ergot alkaloids. The tryptophan dimethylallyltransferase ifgA catalyzes the first step of ergot alkaloid biosynthesis by condensing dimethylallyl diphosphate (DMAP) and tryptophan to form 4-dimethylallyl-L-tryptophan. The second step is catalyzed by the methyltransferase ifgB that methylates 4-dimethylallyl-L-tryptophan in the presence of S-adenosyl-L-methionine, resulting in the formation of N-methyl-dimethylallyl-L-tryptophan. The catalase ifgD and the FAD-dependent oxidoreductase ifgC then transform N-methyl-dimethylallyl-L-tryptophan to chanoclavine-I which is further oxidized by ifgE in the presence of NAD(+), resulting in the formation of chanoclavine-I aldehyde. The chanoclavine-I aldehyde reductases ifgG and/or fgaOx3 reduce chanoclavine-I aldehyde to dihydrochanoclavine-I aldehyde that spontaneously dehydrates to form 6,8-dimethyl-6,7-didehydroergoline. The festuclavine dehydrogenases ifgF1 and/or ifgF2 then catalyze the reduction of 6,8-dimethyl-6,7-didehydroergoline to form festuclavine. Hydrolysis of festuclavine by a yet undetermined cytochrome P450 monooxygenase (called ifgH) then leads to the formation of isofumigaclavine B which is in turn acetylated by ifgI to isofumigaclavine A. Penicillium roqueforti has interestingly at least two sets of genes for the consumption of chanoclavine-I aldehyde on three different loci, the OYEs ifgG/fgaOx3 and the festuclavine synthase homologs ifgF1/ifgF2. The reason for the duplication of these genes is unclear, probably to ensure the conversion of chanoclavine-I aldehyde by differential gene expression under various environmental conditions. This chain is Festuclavine synthase I, found in Penicillium roqueforti (strain FM164).